Reading from the N-terminus, the 165-residue chain is MTALTLPEDIRQQEPSALLYTLVSAYLEHTAQTGDESLSCLSDDQHTLTAFCYLDSQVEEGGFVQLIASGYGEYIFRNPLADSLRRWKIKAVPKVLDKAKALYEQHGKTIETLADGGADIPSLRKQFPEFEEWDGAYYEAAEQDLPLLAEHIQSNWETFAHIGQA.

This sequence belongs to the DMP19-like protein family. Monomer. Homodimer. The monomeric form of DMP19 interacts with the DNA-binding protein HU homodimer with 1:1 stoichiometry. The dimeric form of DMP19 interacts with the Neisseria hypothetical transcription factor (NHTF) dimer.

With respect to regulation, activity can be modulated in vitro by crown ethers, which are small cyclic polyethers that can modify protein surface behavior dramatically by stabilizing either intra- or intermolecular interactions, thereby probably altering the protein's tertiary and quaternary structure. Its function is as follows. Acts as a DNA mimic. Interacts with DNA-binding proteins and prevents their binding to DNA by occupying the DNA binding sites on the proteins, acting as a competitive inhibitor. DMP19 is a bifunctional DNA mimic protein involved in controlling nucleoid formation as well as gene regulation. This bifunctionality depends on different oligomeric states. The monomeric form interacts with the DNA-binding protein HU, which prevents HU from binding to DNA and forming nucleoids. The dimeric form interacts with the Neisseria hypothetical transcription factor (NHTF) and prevents NHTF from binding to its DNA-binding sites, thereby blocking its repressor activity and influencing expression of the target genes. DMP19 might use these different oligomerizations to regulate genes in two steps: the monomeric form may first release selected gene regions in chromosomal DNA by preventing HU from binding to DNA and forming nucleoids, then the dimeric form blocks the gene repressor activity of NHTF and ensures the continued expression of NHTF-controlled genes. The chain is DNA mimic protein DMP19 from Neisseria meningitidis serogroup B (strain ATCC BAA-335 / MC58).